Consider the following 355-residue polypeptide: Probable aldo-keto reductase 3 (355 aa).

Catalysis depends on tyrosine 70, which acts as the Proton donor. Histidine 138 lines the substrate pocket. 217 to 227 (SPLGRGFFSSG) contacts NADP(+).

The protein belongs to the aldo/keto reductase family.

The protein is Probable aldo-keto reductase 3 of Oryza sativa subsp. indica (Rice).